The chain runs to 432 residues: Adenylosuccinate synthetase (432 aa).

GTP-binding positions include 13-19 (GDEGKGK) and 41-43 (GHT). D14 serves as the catalytic Proton acceptor. Mg(2+) is bound by residues D14 and G41. IMP is bound by residues 14–17 (DEGK), 39–42 (NAGH), T130, R144, Q225, T240, and R304. Residue H42 is the Proton donor of the active site. 300–306 (AVTGRPR) contributes to the substrate binding site. Residues R306, 332–334 (KLD), and 415–417 (STG) each bind GTP.

Belongs to the adenylosuccinate synthetase family. Homodimer. Mg(2+) is required as a cofactor.

Its subcellular location is the cytoplasm. It carries out the reaction IMP + L-aspartate + GTP = N(6)-(1,2-dicarboxyethyl)-AMP + GDP + phosphate + 2 H(+). It functions in the pathway purine metabolism; AMP biosynthesis via de novo pathway; AMP from IMP: step 1/2. Functionally, plays an important role in the de novo pathway of purine nucleotide biosynthesis. Catalyzes the first committed step in the biosynthesis of AMP from IMP. This chain is Adenylosuccinate synthetase, found in Haemophilus ducreyi (strain 35000HP / ATCC 700724).